The sequence spans 406 residues: Probable mannan endo-1,4-beta-mannosidase C (406 aa).

The first 20 residues, 1-20 (MLINFEKVLSLALLAGSVSG), serve as a signal peptide directing secretion. Asn58 is a glycosylation site (N-linked (GlcNAc...) asparagine). Substrate is bound at residue Trp80. Residues Asn86 and Asn114 are each glycosylated (N-linked (GlcNAc...) asparagine). Position 201 (Asn201) interacts with substrate. Glu202 serves as the catalytic Proton donor. A substrate-binding site is contributed by Tyr287. The active-site Nucleophile is the Glu320. Asn338 is a glycosylation site (N-linked (GlcNAc...) asparagine). Trp362 lines the substrate pocket.

It belongs to the glycosyl hydrolase 5 (cellulase A) family.

Its subcellular location is the secreted. It catalyses the reaction Random hydrolysis of (1-&gt;4)-beta-D-mannosidic linkages in mannans, galactomannans and glucomannans.. In terms of biological role, endo-1,4-mannanase, a crucial enzyme for depolymerization of seed galactomannans and wood galactoglucomannans. This chain is Probable mannan endo-1,4-beta-mannosidase C (manC), found in Aspergillus terreus (strain NIH 2624 / FGSC A1156).